A 58-amino-acid chain; its full sequence is Photosystem II reaction center protein K (58 aa).

Residues 1 to 21 (MTVSYSIYLENSLHFGDALLA) constitute a propeptide that is removed on maturation. A helical transmembrane segment spans residues 29–49 (IFDPIVDVMPVIPVFFLLLAF).

Belongs to the PsbK family. PSII is composed of 1 copy each of membrane proteins PsbA, PsbB, PsbC, PsbD, PsbE, PsbF, PsbH, PsbI, PsbJ, PsbK, PsbL, PsbM, PsbT, PsbX, PsbY, PsbZ, Psb30/Ycf12, at least 3 peripheral proteins of the oxygen-evolving complex and a large number of cofactors. It forms dimeric complexes.

The protein localises to the plastid. It localises to the chloroplast thylakoid membrane. Functionally, one of the components of the core complex of photosystem II (PSII). PSII is a light-driven water:plastoquinone oxidoreductase that uses light energy to abstract electrons from H(2)O, generating O(2) and a proton gradient subsequently used for ATP formation. It consists of a core antenna complex that captures photons, and an electron transfer chain that converts photonic excitation into a charge separation. The sequence is that of Photosystem II reaction center protein K from Adiantum capillus-veneris (Maidenhair fern).